Here is a 153-residue protein sequence, read N- to C-terminus: ORM1-like protein 1 (153 aa).

Residues 1–27 (MNVGVAHSEVNPNTRVMNSRGIWLTYA) are Cytoplasmic-facing. 2 consecutive transmembrane segments (helical) span residues 28-46 (LGVGMLHIVLLSIPFFSVP) and 47-64 (VVWTLTNVIHNFGMYVFM). Over 65-105 (HAVKGTPFETPDQGKARLLTHWEQLDYGVQFTSSRKFFTIS) the chain is Cytoplasmic. Transmembrane regions (helical) follow at residues 106 to 123 (PIILYFLASFYTKYDTAH) and 124 to 140 (FVINTASLLSVLIPKLP). Residues 141-153 (QLHGVRIFGINKY) are Cytoplasmic-facing.

Belongs to the ORM family. In terms of assembly, ceramide-sensitive subunit of the serine palmitoyltransferase (SPT) complex, which is also composed of SPTLC1, SPTLC2/3 and SPTSSA/B.

It is found in the endoplasmic reticulum membrane. Functionally, plays an essential role in the homeostatic regulation of sphingolipid de novo biosynthesis by modulating the activity of the serine palmitoyltransferase (SPT) in response to ceramide levels. When complexed to SPT, the binding of ceramides to its N-terminus stabilizes a conformation that block SPT substrate entry, hence preventing SPT catalytic activity. Through this mechanism, maintains ceramide levels at sufficient concentrations for the production of complex sphingolipids, but which prevents the accumulation of ceramides to levels that trigger apoptosis. The protein is ORM1-like protein 1 (ormdl1) of Danio rerio (Zebrafish).